The chain runs to 544 residues: Apolipoprotein N-acyltransferase 1 (544 aa).

The next 6 membrane-spanning stretches (helical) occupy residues L30 to L50, F57 to F79, K91 to S111, F115 to G135, I157 to F177, and P197 to I217. The 277-residue stretch at A225–V501 folds into the CN hydrolase domain. Catalysis depends on E272, which acts as the Proton acceptor. Residue K360 is part of the active site. The active-site Nucleophile is the C412. Residues G514–I534 traverse the membrane as a helical segment.

The protein belongs to the CN hydrolase family. Apolipoprotein N-acyltransferase subfamily.

Its subcellular location is the cell inner membrane. The catalysed reaction is N-terminal S-1,2-diacyl-sn-glyceryl-L-cysteinyl-[lipoprotein] + a glycerophospholipid = N-acyl-S-1,2-diacyl-sn-glyceryl-L-cysteinyl-[lipoprotein] + a 2-acyl-sn-glycero-3-phospholipid + H(+). Its pathway is protein modification; lipoprotein biosynthesis (N-acyl transfer). Catalyzes the phospholipid dependent N-acylation of the N-terminal cysteine of apolipoprotein, the last step in lipoprotein maturation. This Treponema denticola (strain ATCC 35405 / DSM 14222 / CIP 103919 / JCM 8153 / KCTC 15104) protein is Apolipoprotein N-acyltransferase 1.